We begin with the raw amino-acid sequence, 504 residues long: Occludin (504 aa).

Over 1 to 57 (MFSKKSYDGPPAGYGPPTGYGAPTADYGYGSPPPGSYYVDDAPQLFYKWTSPPGAVR) the chain is Cytoplasmic. Residues 51 to 253 (SPPGAVRGLQ…ICFFAQKTRS (203 aa)) form the MARVEL domain. Residues 58–80 (GLQAGVLVLCIAIFACVASTLAW) traverse the membrane as a helical segment. The Extracellular portion of the chain corresponds to 81–123 (DYGYGLGGAYGTGLGGFYGSNYYGSGLSYSYGYGGYYGGVNQR). A helical membrane pass occupies residues 124 to 148 (TANGFMIAMAVLCFLAQLGLLVAAL). Topologically, residues 149–158 (SKSGATRSRR) are cytoplasmic. Residues 159–183 (FYLAVLVLSAVLAFVMLIASIVYIM) form a helical membrane-spanning segment. The Extracellular portion of the chain corresponds to 184 to 227 (GVNPQAQMSSGYYYSPLLAMCSQAYGSTYLNQYIYHYCTVDPQE). The cysteines at positions 204 and 221 are disulfide-linked. The chain crosses the membrane as a helical span at residues 228–249 (AVAAVCGFLIVILLCLICFFAQ). The Cytoplasmic portion of the chain corresponds to 250-504 (KTRSKIWRYG…MVSAYDKVRG (255 aa)). The segment at 324–396 (PSGTYSSRGD…VESSDERDQE (73 aa)) is disordered. Residues 361–370 (PARRGRRRRR) show a composition bias toward basic residues. A phosphotyrosine mark is found at tyrosine 379 and tyrosine 383. The tract at residues 379-385 (YETDYTT) is interaction with TJP1. Residues 396–504 (EQWASLYPPI…MVSAYDKVRG (109 aa)) form the OCEL domain. Residues 412–471 (QRYKQEFDTDLKRYKQLCAEMDSINDRLNQLSRRLDSITEDSPQYQDVAEEYNQLKDLKR) adopt a coiled-coil conformation.

This sequence belongs to the ELL/occludin family. In terms of assembly, interacts with TJP1 and TJP3. In terms of processing, phosphorylated. As to expression, localized at tight junctions of both epithelial and endothelial cells. Highly expressed in lung and liver. Expressed at a lower level in brain.

It is found in the cell membrane. It localises to the cell junction. Its subcellular location is the tight junction. Functionally, may play a role in the formation and regulation of the tight junction (TJ) paracellular permeability barrier. Interacts with ZO-1. The polypeptide is Occludin (OCLN) (Gallus gallus (Chicken)).